The chain runs to 37 residues: Mating pheromone Er-22 (37 aa).

Disulfide bonds link Cys3–Cys18, Cys10–Cys32, and Cys15–Cys24.

It is found in the secreted. Mating ciliate pheromones (or gamones) are diffusible extracellular communication signals that distinguish different intraspecific classes of cells commonly referred to as 'mating types'. They prepare the latter for conjugation by changing their cell surface properties. The sequence is that of Mating pheromone Er-22 (MAT22) from Euplotes raikovi.